The following is a 519-amino-acid chain: Laccase-2 (519 aa).

An N-terminal signal peptide occupies residues 1–20 (MGLQRFSFFVTLALVARSLA). Plastocyanin-like domains lie at 22–147 (IGPV…FVVY) and 159–301 (VDNE…ILRY). An N-linked (GlcNAc...) asparagine glycan is attached at N74. Residues H84, H86, H129, and H131 each contribute to the Cu cation site. 2 disulfide bridges follow: C105/C508 and C137/C225. Residues N161, N228, N237, N271, N353, and N361 are each glycosylated (N-linked (GlcNAc...) asparagine). Residues 368-490 (TVPVLLQILS…AGFAIVFAED (123 aa)) enclose the Plastocyanin-like 3 domain. H415, H418, and H420 together coordinate Cu cation. N456 carries N-linked (GlcNAc...) asparagine glycosylation. Residues H472, C473, H474, and H478 each coordinate Cu cation.

This sequence belongs to the multicopper oxidase family. Requires Cu cation as cofactor.

The protein localises to the secreted. The catalysed reaction is 4 hydroquinone + O2 = 4 benzosemiquinone + 2 H2O. Lignin degradation and detoxification of lignin-derived products. In Trametes versicolor (White-rot fungus), this protein is Laccase-2 (LCC2).